The primary structure comprises 185 residues: Celestoxin (185 aa).

Positions 1 to 20 are cleaved as a signal peptide; sequence MKFIAAVLLVALLCPKDSTS. A propeptide spanning residues 21–148 is cleaved from the precursor; the sequence is LASRLSGLLG…GLPVALPVSV (128 aa).

Expressed by the mandibular venom gland.

It localises to the secreted. In terms of biological role, has a hypotensive activity. The polypeptide is Celestoxin (Caribicus warreni (Haitian giant galliwasp)).